Consider the following 108-residue polypeptide: UPF0145 protein LJ_1287 (108 aa).

The protein belongs to the UPF0145 family.

This chain is UPF0145 protein LJ_1287, found in Lactobacillus johnsonii (strain CNCM I-12250 / La1 / NCC 533).